The following is a 101-amino-acid chain: Small ribosomal subunit protein bS6 (101 aa).

The protein belongs to the bacterial ribosomal protein bS6 family.

Binds together with bS18 to 16S ribosomal RNA. The sequence is that of Small ribosomal subunit protein bS6 from Staphylococcus saprophyticus subsp. saprophyticus (strain ATCC 15305 / DSM 20229 / NCIMB 8711 / NCTC 7292 / S-41).